Here is a 120-residue protein sequence, read N- to C-terminus: Large ribosomal subunit protein uL18 (120 aa).

It belongs to the universal ribosomal protein uL18 family. In terms of assembly, part of the 50S ribosomal subunit; part of the 5S rRNA/L5/L18/L25 subcomplex. Contacts the 5S and 23S rRNAs.

Its function is as follows. This is one of the proteins that bind and probably mediate the attachment of the 5S RNA into the large ribosomal subunit, where it forms part of the central protuberance. This chain is Large ribosomal subunit protein uL18, found in Geobacillus thermodenitrificans (strain NG80-2).